The chain runs to 810 residues: Plasminogen (810 aa).

Positions 1–19 are cleaved as a signal peptide; sequence MEHKEVVLLLLLFLKSGQG. The region spanning 20-98 is the PAN domain; that stretch reads EPLDDYVNTK…RDVVLFEKKV (79 aa). 12 disulfide bridges follow: Cys49–Cys73, Cys53–Cys61, Cys103–Cys181, Cys124–Cys164, Cys152–Cys176, Cys185–Cys262, Cys188–Cys316, Cys206–Cys245, Cys234–Cys257, Cys275–Cys352, Cys296–Cys335, and Cys324–Cys347. 3 Kringle domains span residues 103–181, 184–262, and 275–352; these read CKTG…IPEC, ECMH…IPRC, and CLKG…IPSC. The segment covering 125–141 has biased composition (polar residues); sequence QKWSSTSPHRPTFSPAT. Positions 125–145 are disordered; it reads QKWSSTSPHRPTFSPATHPSE. Residues Thr136, Asp158, and Arg172 each contribute to the L-lysine site. O-linked (GalNAc...) threonine glycosylation is present at Thr365. Intrachain disulfides connect Cys377/Cys454, Cys398/Cys437, Cys426/Cys449, Cys481/Cys560, Cys502/Cys543, Cys531/Cys555, Cys567/Cys685, Cys577/Cys585, and Cys607/Cys623. Kringle domains lie at 377-454 and 481-560; these read CYHG…LKKC and CMFG…VPQC. L-lysine is bound by residues Asp432 and Arg445. The 228-residue stretch at 581 to 808 folds into the Peptidase S1 domain; that stretch reads VVGGCVAYPH…FVTWIEGVMR (228 aa). Ser597 bears the Phosphoserine mark. Catalysis depends on charge relay system residues His622 and Asp665. The residue at position 688 (Ser688) is a Phosphoserine. Intrachain disulfides connect Cys699–Cys766, Cys729–Cys745, and Cys756–Cys784. Catalysis depends on Ser760, which acts as the Charge relay system.

This sequence belongs to the peptidase S1 family. Plasminogen subfamily. In terms of assembly, interacts with CSPG4 and AMOT. Interacts (via the Kringle domains) with HRG; the interaction tethers PLG to the cell surface and enhances its activation. Interacts (via Kringle 4 domain) with ADA; the interaction stimulates PLG activation when in complex with DPP4. Angiostatin: Interacts with ATP5F1A; the interaction inhibits most of the angiogenic effects of angiostatin. In the presence of the inhibitor, the activation involves only cleavage after Arg-580, yielding two chains held together by two disulfide bonds. In the absence of the inhibitor, the activation involves additionally the removal of the activation peptide.

It localises to the secreted. The catalysed reaction is Preferential cleavage: Lys-|-Xaa &gt; Arg-|-Xaa, higher selectivity than trypsin. Converts fibrin into soluble products.. With respect to regulation, converted into plasmin by plasminogen activators, both plasminogen and its activator being bound to fibrin. Activated with catalytic amounts of streptokinase. Functionally, plasmin dissolves the fibrin of blood clots and acts as a proteolytic factor in a variety of other processes including embryonic development, tissue remodeling, tumor invasion, and inflammation. In ovulation, weakens the walls of the Graafian follicle. It activates the urokinase-type plasminogen activator, collagenases and several complement zymogens, such as C1, C4 and C5. Cleavage of fibronectin and laminin leads to cell detachment and apoptosis. Also cleaves fibrin, thrombospondin and von Willebrand factor. Its role in tissue remodeling and tumor invasion may be modulated by CSPG4. Binds to cells. This Macaca mulatta (Rhesus macaque) protein is Plasminogen (PLG).